The chain runs to 306 residues: Ribosomal RNA small subunit methyltransferase H (306 aa).

S-adenosyl-L-methionine is bound by residues 33 to 35 (GGY), Asp51, Phe78, Asp96, and Gln103.

This sequence belongs to the methyltransferase superfamily. RsmH family.

The protein localises to the cytoplasm. The enzyme catalyses cytidine(1402) in 16S rRNA + S-adenosyl-L-methionine = N(4)-methylcytidine(1402) in 16S rRNA + S-adenosyl-L-homocysteine + H(+). In terms of biological role, specifically methylates the N4 position of cytidine in position 1402 (C1402) of 16S rRNA. This chain is Ribosomal RNA small subunit methyltransferase H, found in Rickettsia felis (strain ATCC VR-1525 / URRWXCal2) (Rickettsia azadi).